The sequence spans 221 residues: GTP-binding nuclear protein Ran-2 (221 aa).

The Small GTPase Ran-type domain occupies 10–174; sequence DYPSFKLVIV…LYLARKLAGD (165 aa). 21-28 lines the GTP pocket; the sequence is DGGTGKTT. Residues 40-48 are switch-I; sequence KKYEPTIGV. GTP is bound by residues Gly-71, 125–128, and 153–155; these read NKVD and SAK. The interval 71-87 is switch-II; the sequence is GQEKFGGLRDGYYIHGQ.

Belongs to the small GTPase superfamily. Ran family. Found in a nuclear export complex with RanGTP, exportin and pre-miRNA.

Its subcellular location is the nucleus. Functionally, GTP-binding protein involved in nucleocytoplasmic transport. Required for the import of protein into the nucleus and also for RNA export. Involved in chromatin condensation and control of cell cycle. This chain is GTP-binding nuclear protein Ran-2 (RAN2), found in Oryza sativa subsp. indica (Rice).